We begin with the raw amino-acid sequence, 219 residues long: Pyridoxal 5'-phosphate synthase subunit PDX2 (219 aa).

52-54 lines the L-glutamine pocket; that stretch reads GES. Residue Cys-87 is the Nucleophile of the active site. Residues Arg-121 and 153–154 each bind L-glutamine; that span reads IR. Catalysis depends on charge relay system residues His-196 and Glu-198.

The protein belongs to the glutaminase PdxT/SNO family. In terms of assembly, in the presence of Pdx1, forms a dodecamer of heterodimers. Only shows activity in the heterodimer.

Its subcellular location is the cytoplasm. The catalysed reaction is aldehydo-D-ribose 5-phosphate + D-glyceraldehyde 3-phosphate + L-glutamine = pyridoxal 5'-phosphate + L-glutamate + phosphate + 3 H2O + H(+). It carries out the reaction L-glutamine + H2O = L-glutamate + NH4(+). The protein operates within cofactor biosynthesis; pyridoxal 5'-phosphate biosynthesis. Its function is as follows. Catalyzes the hydrolysis of glutamine to glutamate and ammonia as part of the biosynthesis of pyridoxal 5'-phosphate. The resulting ammonia molecule is channeled to the active site of Pdx1. The chain is Pyridoxal 5'-phosphate synthase subunit PDX2 from Plasmodium falciparum (isolate 3D7).